A 357-amino-acid polypeptide reads, in one-letter code: Membrane-bound lytic murein transglycosylase C (357 aa).

The N-terminal stretch at 1–15 (MKKYLLLALLPFLYA) is a signal peptide. Cysteine 16 carries the N-palmitoyl cysteine lipid modification. Residue cysteine 16 is the site of S-diacylglycerol cysteine attachment.

It belongs to the transglycosylase Slt family.

Its subcellular location is the cell outer membrane. It catalyses the reaction Exolytic cleavage of the (1-&gt;4)-beta-glycosidic linkage between N-acetylmuramic acid (MurNAc) and N-acetylglucosamine (GlcNAc) residues in peptidoglycan, from either the reducing or the non-reducing ends of the peptidoglycan chains, with concomitant formation of a 1,6-anhydrobond in the MurNAc residue.. Its function is as follows. Murein-degrading enzyme. May play a role in recycling of muropeptides during cell elongation and/or cell division. The chain is Membrane-bound lytic murein transglycosylase C from Haemophilus influenzae (strain ATCC 51907 / DSM 11121 / KW20 / Rd).